A 437-amino-acid chain; its full sequence is Phosphoribosylamine--glycine ligase (437 aa).

Residues 110-322 (KNLLRSADIP…LVEVMQAVVD (213 aa)) form the ATP-grasp domain. 142–203 (EPTDPVNVVV…EERLTGPEVS (62 aa)) provides a ligand contact to ATP. 2 residues coordinate Mg(2+): E292 and N294.

This sequence belongs to the GARS family. Requires Mg(2+) as cofactor. Mn(2+) is required as a cofactor.

The enzyme catalyses 5-phospho-beta-D-ribosylamine + glycine + ATP = N(1)-(5-phospho-beta-D-ribosyl)glycinamide + ADP + phosphate + H(+). It functions in the pathway purine metabolism; IMP biosynthesis via de novo pathway; N(1)-(5-phospho-D-ribosyl)glycinamide from 5-phospho-alpha-D-ribose 1-diphosphate: step 2/2. This chain is Phosphoribosylamine--glycine ligase, found in Rhodopirellula baltica (strain DSM 10527 / NCIMB 13988 / SH1).